Here is a 231-residue protein sequence, read N- to C-terminus: Endonuclease NucS (231 aa).

Belongs to the NucS endonuclease family.

It is found in the cytoplasm. Cleaves both 3' and 5' ssDNA extremities of branched DNA structures. This chain is Endonuclease NucS, found in Beutenbergia cavernae (strain ATCC BAA-8 / DSM 12333 / CCUG 43141 / JCM 11478 / NBRC 16432 / NCIMB 13614 / HKI 0122).